We begin with the raw amino-acid sequence, 131 residues long: Large ribosomal subunit protein bL17 (131 aa).

This sequence belongs to the bacterial ribosomal protein bL17 family. Part of the 50S ribosomal subunit. Contacts protein L32.

The chain is Large ribosomal subunit protein bL17 from Shewanella amazonensis (strain ATCC BAA-1098 / SB2B).